The sequence spans 404 residues: XK-related protein 8 (404 aa).

8 helical membrane-spanning segments follow: residues 14–34 (FVFS…DVWV), 44–64 (FFWF…VQMF), 167–187 (AVQF…VVDY), 206–226 (SLIY…ALAL), 227–247 (FASV…LVFV), 263–283 (GEWL…FNVA), 292–312 (AIYH…WWCC), and 319–339 (EPYA…GLLF).

It belongs to the XK family.

It is found in the cell membrane. The catalysed reaction is a 1,2-diacyl-sn-glycero-3-phospho-L-serine(in) = a 1,2-diacyl-sn-glycero-3-phospho-L-serine(out). In terms of biological role, phospholipid scramblase that promotes phosphatidylserine exposure on apoptotic cell surface, possibly by mediating phospholipid scrambling. Phosphatidylserine is a specific marker only present at the surface of apoptotic cells and acts as a specific signal for engulfment. In Tetraodon nigroviridis (Spotted green pufferfish), this protein is XK-related protein 8.